The following is a 160-amino-acid chain: Phosphatidylinositol N-acetylglucosaminyltransferase subunit gpi15 (160 aa).

2 helical membrane-spanning segments follow: residues 22-42 (GTQM…SLAI) and 48-68 (IIIT…ISGV).

The protein belongs to the PIGH family.

Its subcellular location is the endoplasmic reticulum membrane. It catalyses the reaction a 1,2-diacyl-sn-glycero-3-phospho-(1D-myo-inositol) + UDP-N-acetyl-alpha-D-glucosamine = a 6-(N-acetyl-alpha-D-glucosaminyl)-1-(1,2-diacyl-sn-glycero-3-phospho)-1D-myo-inositol + UDP + H(+). It participates in glycolipid biosynthesis; glycosylphosphatidylinositol-anchor biosynthesis. Its function is as follows. Part of the complex catalyzing the transfer of N-acetylglucosamine from UDP-N-acetylglucosamine to phosphatidylinositol, the first step of GPI biosynthesis. The sequence is that of Phosphatidylinositol N-acetylglucosaminyltransferase subunit gpi15 (gpi15) from Schizosaccharomyces pombe (strain 972 / ATCC 24843) (Fission yeast).